We begin with the raw amino-acid sequence, 479 residues long: 5-hydroxytryptamine receptor 2B (479 aa).

Over 1–55 (MASSYKMSEQSTISEHILQKTCDHLILTDRSGLKAESAAEEMKQTAENQGNTVHW) the chain is Extracellular. A helical membrane pass occupies residues 56 to 78 (AALLIFAVIIPTIGGNILVILAV). The Cytoplasmic portion of the chain corresponds to 79–89 (SLEKRLQYATN). Residues 90–112 (YFLMSLAVADLLVGLFVMPIALL) traverse the membrane as a helical segment. Topologically, residues 113 to 128 (TIMFEATWPLPLALCP) are extracellular. A disulfide bridge connects residues cysteine 127 and cysteine 206. The helical transmembrane segment at 129-150 (AWLFLDVLFSTASIMHLCAISL) threads the bilayer. Ergotamine is bound by residues aspartate 134 and threonine 139. Positions 151–153 (DRY) match the DRY motif; important for ligand-induced conformation changes motif. The Cytoplasmic portion of the chain corresponds to 151-170 (DRYIAIKKPIQANQCNSRTT). A helical membrane pass occupies residues 171-191 (AFVKITVVWLISIGIAIPVPI). The Extracellular portion of the chain corresponds to 192–215 (KGIEADVVNAHNITCELTKDRFGS). A glycan (N-linked (GlcNAc...) asparagine) is linked at asparagine 203. Leucine 208 is an ergotamine binding site. Residues 211–214 (DRFG) carry the [DE]RFG motif; may stabilize a conformation that preferentially activates signaling via beta-arrestin family members motif. The helical transmembrane segment at 216–238 (FMLFGSLAAFFAPLTIMIVTYFL) threads the bilayer. At 239 to 323 (TIHALRKKAY…TISNEQRASK (85 aa)) the chain is on the cytoplasmic side. The helical transmembrane segment at 324 to 344 (VLGIVFLFFLLMWCPFFITNV) threads the bilayer. Residues 345–359 (TLALCDSCNQTTLKT) are Extracellular-facing. A disulfide bridge connects residues cysteine 349 and cysteine 352. Asparagine 353 carries N-linked (GlcNAc...) asparagine glycosylation. Residues 360–381 (LLQIFVWVGYVSSGVNPLIYTL) form a helical membrane-spanning segment. An NPxxY motif; important for ligand-induced conformation changes and signaling motif is present at residues 375–379 (NPLIY). Topologically, residues 382–479 (FNKTFREAFG…DKVEDQVSYI (98 aa)) are cytoplasmic. Cysteine 396 carries the S-palmitoyl cysteine lipid modification. The PDZ-binding signature appears at 477–479 (SYI).

This sequence belongs to the G-protein coupled receptor 1 family. As to quaternary structure, interacts (via C-terminus) with MPDZ. Stomach fundus.

It is found in the cell membrane. The protein resides in the synapse. Its subcellular location is the synaptosome. In terms of biological role, G-protein coupled receptor for 5-hydroxytryptamine (serotonin). Also functions as a receptor for various ergot alkaloid derivatives and psychoactive substances. Ligand binding causes a conformation change that triggers signaling via guanine nucleotide-binding proteins (G proteins) and modulates the activity of downstream effectors. HTR2B is coupled to G(q)/G(11) G alpha proteins and activates phospholipase C-beta, releasing diacylglycerol (DAG) and inositol 1,4,5-trisphosphate (IP3) second messengers that modulate the activity of phosphatidylinositol 3-kinase and promote the release of Ca(2+) ions from intracellular stores, respectively. Beta-arrestin family members inhibit signaling via G proteins and mediate activation of alternative signaling pathways. Plays a role in the regulation of dopamine and 5-hydroxytryptamine release, 5-hydroxytryptamine uptake and in the regulation of extracellular dopamine and 5-hydroxytryptamine levels, and thereby affects neural activity. May play a role in the perception of pain. Plays a role in the regulation of behavior, including impulsive behavior. Required for normal proliferation of embryonic cardiac myocytes and normal heart development. Protects cardiomyocytes against apoptosis. Plays a role in the adaptation of pulmonary arteries to chronic hypoxia. Plays a role in vasoconstriction. Required for normal osteoblast function and proliferation, and for maintaining normal bone density. Required for normal proliferation of the interstitial cells of Cajal in the intestine. The chain is 5-hydroxytryptamine receptor 2B (Htr2b) from Rattus norvegicus (Rat).